We begin with the raw amino-acid sequence, 625 residues long: Vitamin B12 transporter BtuB (625 aa).

The first 21 residues, 1 to 21, serve as a signal peptide directing secretion; the sequence is MTIKKYTLLTALSVTAFSGWA. Residues 31–38 carry the TonB box motif; it reads DEMVVTAN. The TBDR plug domain occupies 43-157; the sequence is PKSSVLAPVD…IGGVINILTG (115 aa). Cyanocob(III)alamin is bound by residues serine 90, asparagine 97, and 115-116; that span reads IT. The TBDR beta-barrel domain maps to 160–625; the sequence is KPGTTLSAGL…EYYFTGSYNF (466 aa). A run of 3 beta stranded transmembrane segments spans residues 163-170, 174-183, and 189-200; these read TTLSAGLG, YQTYDGSTQQ, and TTVTLAGNYTYS. Residues aspartate 204, glutamine 217, aspartate 219, and aspartate 221 each coordinate Ca(2+). A run of 2 beta stranded transmembrane segments spans residues 223-233 and 238-254; these read FMGKMLWAGLE and EQFN…NRSD. Ca(2+)-binding residues include tyrosine 255, aspartate 256, and aspartate 269. 14 consecutive transmembrane segments (beta stranded) span residues 271–285, 287–304, 317–333, 336–345, 363–379, 381–391, 395–410, 413–427, 445–454, 460–469, 484–501, 505–520, 528–540, and 546–561; these read RKLS…LRYK, GIYA…KDYN, SLDE…NTFQ, NGMISAGADW, FTQH…QQIS, VTLEGAVRSDD, FGWH…WEFI, YRLI…KAPN, ESKQWEGGVE, LTWRLSAYRN, YFNI…TGSF, PLSH…PRNA, RRAK…QLDW, and DWSV…YDKD. Serine 317 provides a ligand contact to cyanocob(III)alamin. Cyanocob(III)alamin is bound at residue arginine 528. Tyrosine 562 lines the cyanocob(III)alamin pocket. Beta stranded transmembrane passes span 569–583, 596–607, and 613–625; these read TVEL…LAVS, IANLFDKDYEMV, and PGRE…SYNF. Residues 608-625 carry the TonB C-terminal box motif; that stretch reads YGYQTPGREYYFTGSYNF.

The protein belongs to the TonB-dependent receptor family. BtuB (TC 1.B.14.3.1) subfamily.

The protein localises to the cell outer membrane. In terms of biological role, involved in the active translocation of vitamin B12 (cyanocobalamin) across the outer membrane to the periplasmic space. It derives its energy for transport by interacting with the trans-periplasmic membrane protein TonB. This Yersinia pestis bv. Antiqua (strain Antiqua) protein is Vitamin B12 transporter BtuB.